We begin with the raw amino-acid sequence, 217 residues long: IMPACT family member YvyE (217 aa).

Belongs to the IMPACT family.

In Bacillus subtilis (strain 168), this protein is IMPACT family member YvyE (yvyE).